We begin with the raw amino-acid sequence, 754 residues long: ATP-dependent zinc metalloprotease FtsH (754 aa).

The Cytoplasmic portion of the chain corresponds to 1–9 (MKQRMKKPS). A helical transmembrane segment spans residues 10–30 (LGTFILILILIGILAYVLWQF). Residues 31–186 (LSPKLGYKSL…FDRPRGNFLS (156 aa)) are Extracellular-facing. A helical transmembrane segment spans residues 187–207 (SFIVPYIPFLLISLFGFWLFF). The Cytoplasmic segment spans residues 208 to 754 (RLSQNSQAGG…ESKIDSSKEQ (547 aa)). Residue 277 to 284 (GPPGTGKT) coordinates ATP. A Zn(2+)-binding site is contributed by His-499. Glu-500 is an active-site residue. Residues His-503 and Asp-577 each contribute to the Zn(2+) site. Positions 713–754 (QEKSYENEDQNQNSLEAINYNIDDQDDDKNDSESKIDSSKEQ) are disordered. Positions 743–754 (DSESKIDSSKEQ) are enriched in basic and acidic residues.

The protein in the central section; belongs to the AAA ATPase family. In the C-terminal section; belongs to the peptidase M41 family. In terms of assembly, homohexamer. Zn(2+) is required as a cofactor.

The protein resides in the cell membrane. Functionally, acts as a processive, ATP-dependent zinc metallopeptidase for both cytoplasmic and membrane proteins. Plays a role in the quality control of integral membrane proteins. This is ATP-dependent zinc metalloprotease FtsH from Mesomycoplasma conjunctivae (strain ATCC 25834 / NCTC 10147 / HRC/581) (Mycoplasma conjunctivae).